The primary structure comprises 129 residues: Small ribosomal subunit protein uS11 (129 aa).

Belongs to the universal ribosomal protein uS11 family. In terms of assembly, part of the 30S ribosomal subunit. Interacts with proteins S7 and S18. Binds to IF-3.

Its function is as follows. Located on the platform of the 30S subunit, it bridges several disparate RNA helices of the 16S rRNA. Forms part of the Shine-Dalgarno cleft in the 70S ribosome. This chain is Small ribosomal subunit protein uS11, found in Bradyrhizobium sp. (strain ORS 278).